A 181-amino-acid chain; its full sequence is ATP synthase subunit b (181 aa).

The chain crosses the membrane as a helical span at residues 12 to 32 (LPAVYDIVWSAVVFVVLLVVI).

Belongs to the ATPase B chain family. As to quaternary structure, F-type ATPases have 2 components, F(1) - the catalytic core - and F(0) - the membrane proton channel. F(1) has five subunits: alpha(3), beta(3), gamma(1), delta(1), epsilon(1). F(0) has three main subunits: a(1), b(2) and c(10-14). The alpha and beta chains form an alternating ring which encloses part of the gamma chain. F(1) is attached to F(0) by a central stalk formed by the gamma and epsilon chains, while a peripheral stalk is formed by the delta and b chains.

It localises to the cell membrane. F(1)F(0) ATP synthase produces ATP from ADP in the presence of a proton or sodium gradient. F-type ATPases consist of two structural domains, F(1) containing the extramembraneous catalytic core and F(0) containing the membrane proton channel, linked together by a central stalk and a peripheral stalk. During catalysis, ATP synthesis in the catalytic domain of F(1) is coupled via a rotary mechanism of the central stalk subunits to proton translocation. Functionally, component of the F(0) channel, it forms part of the peripheral stalk, linking F(1) to F(0). In Clavibacter sepedonicus (Clavibacter michiganensis subsp. sepedonicus), this protein is ATP synthase subunit b.